Here is a 310-residue protein sequence, read N- to C-terminus: Pantothenate kinase (310 aa).

An ATP-binding site is contributed by 95-102 (GSVAVGKS).

It belongs to the prokaryotic pantothenate kinase family.

It localises to the cytoplasm. The enzyme catalyses (R)-pantothenate + ATP = (R)-4'-phosphopantothenate + ADP + H(+). It functions in the pathway cofactor biosynthesis; coenzyme A biosynthesis; CoA from (R)-pantothenate: step 1/5. This chain is Pantothenate kinase, found in Rhodococcus erythropolis (strain PR4 / NBRC 100887).